Reading from the N-terminus, the 299-residue chain is Protoheme IX farnesyltransferase 1 (299 aa).

The next 9 membrane-spanning stretches (helical) occupy residues 25–45 (VVVL…RAGV), 47–67 (WSVL…AAVV), 95–115 (LPAL…LLAF), 119–139 (LTAW…TGFL), 147–167 (IVIG…AVSG), 173–193 (PLLL…ALAI), 217–237 (ALHI…PYAI), 243–263 (LYLA…WVLY), and 279–299 (IGYL…LLNL).

This sequence belongs to the UbiA prenyltransferase family. Protoheme IX farnesyltransferase subfamily.

The protein resides in the cell inner membrane. The catalysed reaction is heme b + (2E,6E)-farnesyl diphosphate + H2O = Fe(II)-heme o + diphosphate. It participates in porphyrin-containing compound metabolism; heme O biosynthesis; heme O from protoheme: step 1/1. In terms of biological role, converts heme B (protoheme IX) to heme O by substitution of the vinyl group on carbon 2 of heme B porphyrin ring with a hydroxyethyl farnesyl side group. The chain is Protoheme IX farnesyltransferase 1 from Pseudomonas entomophila (strain L48).